A 205-amino-acid polypeptide reads, in one-letter code: Proteasome subunit beta type-3 (205 aa).

Ser2 carries the post-translational modification N-acetylserine. Position 77 is an N6-acetyllysine (Lys77).

It belongs to the peptidase T1B family. In terms of assembly, the 26S proteasome consists of a 20S proteasome core and two 19S regulatory subunits. The 20S proteasome core is a barrel-shaped complex made of 28 subunits that are arranged in four stacked rings. The two outer rings are each formed by seven alpha subunits, and the two inner rings are formed by seven beta subunits. The proteolytic activity is exerted by three beta-subunits PSMB5, PSMB6 and PSMB7. (Microbial infection) Interacts with HIV-1 TAT protein.

Its subcellular location is the cytoplasm. The protein resides in the nucleus. Non-catalytic component of the 20S core proteasome complex involved in the proteolytic degradation of most intracellular proteins. This complex plays numerous essential roles within the cell by associating with different regulatory particles. Associated with two 19S regulatory particles, forms the 26S proteasome and thus participates in the ATP-dependent degradation of ubiquitinated proteins. The 26S proteasome plays a key role in the maintenance of protein homeostasis by removing misfolded or damaged proteins that could impair cellular functions, and by removing proteins whose functions are no longer required. Associated with the PA200 or PA28, the 20S proteasome mediates ubiquitin-independent protein degradation. This type of proteolysis is required in several pathways including spermatogenesis (20S-PA200 complex) or generation of a subset of MHC class I-presented antigenic peptides (20S-PA28 complex). In Homo sapiens (Human), this protein is Proteasome subunit beta type-3.